We begin with the raw amino-acid sequence, 373 residues long: Protodeoxyviolaceinate monooxygenase (373 aa).

K2–K20 is an FAD binding site.

FAD is required as a cofactor.

The enzyme catalyses protodeoxyviolaceinate + NADH + O2 + H(+) = protoviolaceinate + NAD(+) + H2O. The catalysed reaction is protodeoxyviolaceinate + NADPH + O2 + H(+) = protoviolaceinate + NADP(+) + H2O. Its pathway is pigment biosynthesis; violacein biosynthesis. In terms of biological role, catalyzes the oxygenation of the 6-position of protodeoxyviolaceinate to form proviolacein. The chain is Protodeoxyviolaceinate monooxygenase (vioD) from Chromobacterium violaceum (strain ATCC 12472 / DSM 30191 / JCM 1249 / CCUG 213 / NBRC 12614 / NCIMB 9131 / NCTC 9757 / MK).